Consider the following 194-residue polypeptide: Probable WRKY transcription factor 51 (194 aa).

The segment at 58 to 97 (SSETFTGESGGSGSATTLSKKESTNRGSKESDQTKETGHR) is disordered. The segment covering 76–96 (SKKESTNRGSKESDQTKETGH) has biased composition (basic and acidic residues). Positions 104–169 (SKIDVMDDGF…YEGVHNHESL (66 aa)) form a DNA-binding region, WRKY.

It belongs to the WRKY group II-c family. In terms of assembly, interacts with CAMBP25/VQ15.

The protein localises to the nucleus. Its function is as follows. Transcription factor. Interacts specifically with the W box (5'-(T)TGAC[CT]-3'), a frequently occurring elicitor-responsive cis-acting element. Involved in defense responses. May act as positive regulator of salicylic acid (SA)-mediated signaling and negative regulator of jasmonic acid (JA)-mediated signaling. This Arabidopsis thaliana (Mouse-ear cress) protein is Probable WRKY transcription factor 51 (WRKY51).